The following is a 353-amino-acid chain: Protein pelota homolog (353 aa).

Belongs to the eukaryotic release factor 1 family. Pelota subfamily. In terms of assembly, monomer. A divalent metal cation serves as cofactor.

It is found in the cytoplasm. May function in recognizing stalled ribosomes, interact with stem-loop structures in stalled mRNA molecules, and effect endonucleolytic cleavage of the mRNA. May play a role in the release non-functional ribosomes and degradation of damaged mRNAs. Has endoribonuclease activity. This Methanopyrus kandleri (strain AV19 / DSM 6324 / JCM 9639 / NBRC 100938) protein is Protein pelota homolog.